The chain runs to 471 residues: Ribonuclease 3 (471 aa).

A compositionally biased stretch (basic residues) spans 1–10 (MGSKVAGKKK). 2 disordered regions span residues 1-29 (MGSK…RENI) and 168-189 (NLNE…PTKA). Positions 20–29 (ENGSQQRENI) are enriched in polar residues. The span at 172-184 (KEDEEEDEGEDSY) shows a compositional bias: acidic residues. Residues 227–331 (LSGSEMINAH…YIGGLMEDDP (105 aa)) enclose the RNase III domain. One can recognise a DRBM domain in the interval 369–437 (NAKRQLYSLI…AENALRDKKM (69 aa)). Residues 451-471 (SESVLKDPSQKNKKRKFSDTS) form a disordered region. Residues 461–471 (KNKKRKFSDTS) are compositionally biased toward basic residues.

It carries out the reaction Endonucleolytic cleavage to 5'-phosphomonoester.. Functionally, dsRNA-specific nuclease that cleaves eukaryotic pre-ribosomal RNA at the U3 snoRNP-dependent A0 site in the 5'-external transcribed spacer (ETS) and in the 3'-ETS. In vitro, cleaves synthetic 5'-ETS RNA A0 site in the absence of snoRNA or other factors. Has an essential growth function in addition to pre-rRNA processing. The chain is Ribonuclease 3 (RNT1) from Saccharomyces cerevisiae (strain ATCC 204508 / S288c) (Baker's yeast).